Reading from the N-terminus, the 84-residue chain is Large ribosomal subunit protein bL27 (84 aa).

The disordered stretch occupies residues 1–21 (MAHKKGQGSTRNGRDSHSKRL). A compositionally biased stretch (basic and acidic residues) spans 12–21 (NGRDSHSKRL).

It belongs to the bacterial ribosomal protein bL27 family.

The polypeptide is Large ribosomal subunit protein bL27 (Methylacidiphilum infernorum (isolate V4) (Methylokorus infernorum (strain V4))).